A 244-amino-acid chain; its full sequence is Small ribosomal subunit protein uS2m (244 aa).

The protein belongs to the universal ribosomal protein uS2 family.

It is found in the mitochondrion. The chain is Small ribosomal subunit protein uS2m (mrps2) from Dictyostelium discoideum (Social amoeba).